A 152-amino-acid polypeptide reads, in one-letter code: Arginine repressor (152 aa).

Belongs to the ArgR family.

The protein resides in the cytoplasm. It participates in amino-acid biosynthesis; L-arginine biosynthesis [regulation]. Its function is as follows. Regulates arginine biosynthesis genes. The chain is Arginine repressor from Lactococcus lactis subsp. cremoris (strain MG1363).